Consider the following 925-residue polypeptide: Aspulvinone E synthetase melA (925 aa).

The interval 11-434 (ETAAARNGDG…GGRAKETIII (424 aa)) is adenylation (A) domain. In terms of domain architecture, Carrier spans 564–644 (SPKNDFEKGL…ELAAALDNLY (81 aa)). O-(pantetheine 4'-phosphoryl)serine is present on Ser601. Positions 663-923 (PLWLVHPGAG…KILRSALAER (261 aa)) are thioesterase (TE) domain.

It belongs to the ATP-dependent AMP-binding enzyme family.

It is found in the cytoplasm. Its function is as follows. Nonribosomal peptide synthase; part of the gene cluster that mediates the biosynthesis of Asp-melanin, a pigment that confers resistance against UV light and hampers phagocytosis by soil amoeba. The nonribosomal peptide synthase melA converts 4-hydroxyphenylpyruvate (4-HPPA) to aspulvinone E. The tyrosinase tyrP then performs hydroxylations of both aromatic moieties of aspulvinone E. The product of tyrP is highly unstable, and, due to the high reactivity of methides and ortho-diquinones, the polymeric Asp-melanin forms spontaneously. The protein is Aspulvinone E synthetase melA of Aspergillus terreus.